The chain runs to 169 residues: MAKREPIHDNSIRTEWEAKIAKLTSVDQATKFIQDFRLAYTSPFRKSYDIDVDYQYIERKIEEKLSVLKTEKLPVADLITKATTGEDRAAVEATWIAKIKAAKSKYEADGIHIEFRQLYKPPVLPVNVFLRTDAALGTVLMEIRNTDYYGTPLEGLRKEPGVKVLHLQA.

In terms of assembly, m.trichosporium has two forms of methane monooxygenase, a soluble and a membrane-bound type. The soluble type consists of four components (A to D): protein A, comprising three chains, in an alpha-2, beta-2, gamma-2 configuration, is a nonheme iron protein containing an unusual mu-hydroxo bridge structure at its active site and interacts with both oxygen and methane.

It carries out the reaction methane + NADH + O2 + H(+) = methanol + NAD(+) + H2O. The enzyme catalyses methane + NADPH + O2 + H(+) = methanol + NADP(+) + H2O. Responsible for the initial oxygenation of methane to methanol in methanotrophs. It also catalyzes the monohydroxylation of a variety of unactivated alkenes, alicyclic, aromatic and heterocyclic compounds. The polypeptide is Methane monooxygenase component A gamma chain (mmoZ) (Methylosinus trichosporium).